A 110-amino-acid chain; its full sequence is Insulin (110 aa).

The first 24 residues, methionine 1–alanine 24, serve as a signal peptide directing secretion. Cystine bridges form between cysteine 31–cysteine 96, cysteine 43–cysteine 109, and cysteine 95–cysteine 100. A propeptide spans glutamate 57–glutamine 87 (c peptide).

This sequence belongs to the insulin family. In terms of assembly, heterodimer of a B chain and an A chain linked by two disulfide bonds.

The protein resides in the secreted. Functionally, insulin decreases blood glucose concentration. It increases cell permeability to monosaccharides, amino acids and fatty acids. It accelerates glycolysis, the pentose phosphate cycle, and glycogen synthesis in liver. This is Insulin (INS) from Pan troglodytes (Chimpanzee).